The sequence spans 384 residues: Succinyl-diaminopimelate desuccinylase (384 aa).

Residue H71 participates in Zn(2+) binding. The active site involves D73. D104 is a binding site for Zn(2+). The Proton acceptor role is filled by E139. Zn(2+) is bound by residues E140, E168, and H357.

This sequence belongs to the peptidase M20A family. DapE subfamily. Homodimer. The cofactor is Zn(2+). It depends on Co(2+) as a cofactor.

It carries out the reaction N-succinyl-(2S,6S)-2,6-diaminopimelate + H2O = (2S,6S)-2,6-diaminopimelate + succinate. It participates in amino-acid biosynthesis; L-lysine biosynthesis via DAP pathway; LL-2,6-diaminopimelate from (S)-tetrahydrodipicolinate (succinylase route): step 3/3. Functionally, catalyzes the hydrolysis of N-succinyl-L,L-diaminopimelic acid (SDAP), forming succinate and LL-2,6-diaminopimelate (DAP), an intermediate involved in the bacterial biosynthesis of lysine and meso-diaminopimelic acid, an essential component of bacterial cell walls. The polypeptide is Succinyl-diaminopimelate desuccinylase (Bradyrhizobium sp. (strain ORS 278)).